The primary structure comprises 469 residues: uncharacterized protein (469 aa).

Residues 152–161 (VREGKEEKKG) show a composition bias toward basic and acidic residues. Residues 152-174 (VREGKEEKKGGPPGRGPPGWRRR) form a disordered region. Coiled coils occupy residues 346–375 (KAAL…RSES) and 423–453 (SDIT…KIKG).

This is an uncharacterized protein from Homo sapiens (Human).